Consider the following 444-residue polypeptide: 23S rRNA (uracil(1939)-C(5))-methyltransferase RlmD (444 aa).

The TRAM domain occupies 5 to 67 (RNRFDRTPFQ…RHFDEAKTVE (63 aa)). Positions 80, 86, 89, and 168 each coordinate [4Fe-4S] cluster. Positions 276, 305, 310, 326, 353, and 374 each coordinate S-adenosyl-L-methionine. Catalysis depends on C400, which acts as the Nucleophile.

The protein belongs to the class I-like SAM-binding methyltransferase superfamily. RNA M5U methyltransferase family. RlmD subfamily.

The enzyme catalyses uridine(1939) in 23S rRNA + S-adenosyl-L-methionine = 5-methyluridine(1939) in 23S rRNA + S-adenosyl-L-homocysteine + H(+). Functionally, catalyzes the formation of 5-methyl-uridine at position 1939 (m5U1939) in 23S rRNA. In Xanthomonas oryzae pv. oryzae (strain MAFF 311018), this protein is 23S rRNA (uracil(1939)-C(5))-methyltransferase RlmD.